Consider the following 610-residue polypeptide: Phosphomethylpyrimidine synthase (610 aa).

Residues Asn-216, Met-245, Tyr-274, His-310, 330 to 332 (SRG), 371 to 374 (DGLR), and Glu-410 each bind substrate. His-414 is a Zn(2+) binding site. A substrate-binding site is contributed by Tyr-437. His-478 contributes to the Zn(2+) binding site. The [4Fe-4S] cluster site is built by Cys-558, Cys-561, and Cys-566.

It belongs to the ThiC family. In terms of assembly, homodimer. [4Fe-4S] cluster serves as cofactor.

The enzyme catalyses 5-amino-1-(5-phospho-beta-D-ribosyl)imidazole + S-adenosyl-L-methionine = 4-amino-2-methyl-5-(phosphooxymethyl)pyrimidine + CO + 5'-deoxyadenosine + formate + L-methionine + 3 H(+). It participates in cofactor biosynthesis; thiamine diphosphate biosynthesis. Its function is as follows. Catalyzes the synthesis of the hydroxymethylpyrimidine phosphate (HMP-P) moiety of thiamine from aminoimidazole ribotide (AIR) in a radical S-adenosyl-L-methionine (SAM)-dependent reaction. In Rhizobium etli (strain ATCC 51251 / DSM 11541 / JCM 21823 / NBRC 15573 / CFN 42), this protein is Phosphomethylpyrimidine synthase.